Here is a 494-residue protein sequence, read N- to C-terminus: ATP-dependent RNA helicase HAS1 (494 aa).

The segment at Met1–Glu23 is disordered. The short motif at His29–Ala57 is the Q motif element. One can recognise a Helicase ATP-binding domain in the interval Ile60–Phe236. Ala73–Thr80 is a binding site for ATP. The DEAD box signature appears at Asp183–Asp186. One can recognise a Helicase C-terminal domain in the interval Gly250–Ile420. Positions Lys262–Lys278 match the Bipartite nuclear localization signal motif.

The protein belongs to the DEAD box helicase family. DDX18/HAS1 subfamily. As to quaternary structure, associates in the nucleolus with the 60S and pre-60S ribosomal subunits.

Its subcellular location is the nucleus. It localises to the nucleolus. It carries out the reaction ATP + H2O = ADP + phosphate + H(+). Functionally, ATP-dependent RNA helicase involved in 40S ribosomal subunit biogenesis. Required for the processing and cleavage of 35S pre-rRNA at sites A0, A1, and A2, leading to mature 18S rRNA. This chain is ATP-dependent RNA helicase HAS1 (HAS1), found in Candida glabrata (strain ATCC 2001 / BCRC 20586 / JCM 3761 / NBRC 0622 / NRRL Y-65 / CBS 138) (Yeast).